The sequence spans 91 residues: DNA-binding protein HU (91 aa).

It belongs to the bacterial histone-like protein family.

Histone-like DNA-binding protein which is capable of wrapping DNA to stabilize it, and thus to prevent its denaturation under extreme environmental conditions. Also seems to act as a fortuitous virulence factor in delayed sequelae by binding to heparan sulfate-proteoglycans in the extracellular matrix of target organs and acting as a nidus for in situ immune complex formation. This Streptococcus pyogenes serotype M1 protein is DNA-binding protein HU (hup).